Here is a 139-residue protein sequence, read N- to C-terminus: Putative nickel-responsive regulator (139 aa).

Ni(2+) is bound by residues H79, H90, H92, and C98.

The protein belongs to the transcriptional regulatory CopG/NikR family. Ni(2+) is required as a cofactor.

In terms of biological role, transcriptional regulator. The sequence is that of Putative nickel-responsive regulator from Trichlorobacter lovleyi (strain ATCC BAA-1151 / DSM 17278 / SZ) (Geobacter lovleyi).